A 144-amino-acid polypeptide reads, in one-letter code: UPF0102 protein BPSL3274 (144 aa).

The interval 1 to 28 (MCHAREASPGTGEPEAAPRDNFPREAGS) is disordered. Residues 16–28 (AAPRDNFPREAGS) show a composition bias toward basic and acidic residues.

It belongs to the UPF0102 family.

In Burkholderia pseudomallei (strain K96243), this protein is UPF0102 protein BPSL3274.